Consider the following 99-residue polypeptide: SAGA-associated factor 11 (99 aa).

An SGF11-type zinc finger spans residues 71 to 92; it reads IHCENCGRDVSANRLAAHLQRC.

Belongs to the SGF11 family. Component of the 1.8 MDa SAGA transcription coactivator-HAT complex. SAGA is built of 5 distinct domains with specialized functions. Within the SAGA complex, SUS1, SGF11, SGF73 and UBP8 form an additional subcomplex of SAGA called the DUB module (deubiquitination module). Interacts directly with SGF73, SUS1 and UBP8.

It localises to the nucleus. Functionally, functions as a component of the transcription regulatory histone acetylation (HAT) complex SAGA. At the promoters, SAGA is required for recruitment of the basal transcription machinery. It influences RNA polymerase II transcriptional activity through different activities such as TBP interaction and promoter selectivity, interaction with transcription activators, and chromatin modification through histone acetylation and deubiquitination. SAGA acetylates nucleosomal histone H3 to some extent (to form H3K9ac, H3K14ac, H3K18ac and H3K23ac). SAGA interacts with DNA via upstream activating sequences (UASs). Involved in transcriptional regulation of a subset of SAGA-regulated genes. Within the SAGA complex, participates in a subcomplex, that specifically deubiquitinates histones H2B. The chain is SAGA-associated factor 11 from Saccharomyces cerevisiae (strain RM11-1a) (Baker's yeast).